A 337-amino-acid polypeptide reads, in one-letter code: WAT1-related protein At1g11460 (337 aa).

Helical transmembrane passes span tryptophan 14–valine 34, isoleucine 46–leucine 66, phenylalanine 83–tyrosine 103, threonine 107–leucine 127, alanine 139–phenylalanine 159, tryptophan 188–phenylalanine 208, phenylalanine 220–tyrosine 240, phenylalanine 254–valine 274, valine 284–isoleucine 304, and leucine 309–tryptophan 329. Positions methionine 27–leucine 157 constitute an EamA 1 domain. The region spanning phenylalanine 220–leucine 328 is the EamA 2 domain.

The protein belongs to the drug/metabolite transporter (DMT) superfamily. Plant drug/metabolite exporter (P-DME) (TC 2.A.7.4) family.

The protein resides in the membrane. In Arabidopsis thaliana (Mouse-ear cress), this protein is WAT1-related protein At1g11460.